The primary structure comprises 131 residues: UPF0102 protein YraN (131 aa).

It belongs to the UPF0102 family.

This Salmonella typhi protein is UPF0102 protein YraN.